The sequence spans 129 residues: Large-conductance mechanosensitive channel (129 aa).

3 consecutive transmembrane segments (helical) span residues I14–L34, I38–Y58, and L67–A87.

The protein belongs to the MscL family. Homopentamer.

Its subcellular location is the cell membrane. In terms of biological role, channel that opens in response to stretch forces in the membrane lipid bilayer. May participate in the regulation of osmotic pressure changes within the cell. The sequence is that of Large-conductance mechanosensitive channel from Lysinibacillus sphaericus (strain C3-41).